The chain runs to 287 residues: ATP synthase gamma chain (287 aa).

It belongs to the ATPase gamma chain family. F-type ATPases have 2 components, CF(1) - the catalytic core - and CF(0) - the membrane proton channel. CF(1) has five subunits: alpha(3), beta(3), gamma(1), delta(1), epsilon(1). CF(0) has three main subunits: a, b and c.

It localises to the cell inner membrane. Functionally, produces ATP from ADP in the presence of a proton gradient across the membrane. The gamma chain is believed to be important in regulating ATPase activity and the flow of protons through the CF(0) complex. The sequence is that of ATP synthase gamma chain from Parabacteroides distasonis (strain ATCC 8503 / DSM 20701 / CIP 104284 / JCM 5825 / NCTC 11152).